A 471-amino-acid polypeptide reads, in one-letter code: Sulfate adenylyltransferase subunit 1 (471 aa).

The tr-type G domain maps to 22–239 (KDMLRFLTCG…NIEIGEDDNL (218 aa)). Residues 31-38 (GSVDDGKS) are G1. Position 31 to 38 (31 to 38 (GSVDDGKS)) interacts with GTP. The tract at residues 89–93 (GITID) is G2. Residues 110 to 113 (DTPG) are G3. Residues 110-114 (DTPGH) and 165-168 (NKMD) contribute to the GTP site. The G4 stretch occupies residues 165 to 168 (NKMD). Positions 202–204 (SAL) are G5.

The protein belongs to the TRAFAC class translation factor GTPase superfamily. Classic translation factor GTPase family. CysN/NodQ subfamily. As to quaternary structure, heterodimer composed of CysD, the smaller subunit, and CysN.

It catalyses the reaction sulfate + ATP + H(+) = adenosine 5'-phosphosulfate + diphosphate. The protein operates within sulfur metabolism; hydrogen sulfide biosynthesis; sulfite from sulfate: step 1/3. With CysD forms the ATP sulfurylase (ATPS) that catalyzes the adenylation of sulfate producing adenosine 5'-phosphosulfate (APS) and diphosphate, the first enzymatic step in sulfur assimilation pathway. APS synthesis involves the formation of a high-energy phosphoric-sulfuric acid anhydride bond driven by GTP hydrolysis by CysN coupled to ATP hydrolysis by CysD. The protein is Sulfate adenylyltransferase subunit 1 of Alteromonas mediterranea (strain DSM 17117 / CIP 110805 / LMG 28347 / Deep ecotype).